The sequence spans 300 residues: Ribosomal protein L11 methyltransferase (300 aa).

Positions 147, 168, 190, and 236 each coordinate S-adenosyl-L-methionine.

It belongs to the methyltransferase superfamily. PrmA family.

It is found in the cytoplasm. The catalysed reaction is L-lysyl-[protein] + 3 S-adenosyl-L-methionine = N(6),N(6),N(6)-trimethyl-L-lysyl-[protein] + 3 S-adenosyl-L-homocysteine + 3 H(+). Methylates ribosomal protein L11. This chain is Ribosomal protein L11 methyltransferase, found in Leptospira borgpetersenii serovar Hardjo-bovis (strain JB197).